A 212-amino-acid polypeptide reads, in one-letter code: Putative protein phosphatase 2C 53 (212 aa).

Positions 1 to 208 constitute a PPM-type phosphatase domain; the sequence is MEDRFSAITN…DDISVMLIPL (208 aa). Aspartate 199 serves as a coordination point for Mn(2+).

The protein belongs to the PP2C family. It depends on Mg(2+) as a cofactor. Mn(2+) is required as a cofactor.

The enzyme catalyses O-phospho-L-seryl-[protein] + H2O = L-seryl-[protein] + phosphate. It catalyses the reaction O-phospho-L-threonyl-[protein] + H2O = L-threonyl-[protein] + phosphate. In Arabidopsis thaliana (Mouse-ear cress), this protein is Putative protein phosphatase 2C 53.